We begin with the raw amino-acid sequence, 351 residues long: MINCGDVYKVIEAMVPLYVALILGYGSVKWWHIFTRDQCDAINRLVCYFTLPLFTIEFTAHVDPFNMNYRFIAADVLSKVIIVTVLALWAKYSNKGSYCWSITSFSLCTLTNSLVVGVPLAKAMYGQQAVDLVVQSSVFQAIVWLTLLLFVLEFRKAGFSSNNISDVQVDNINIESGKRETVVVGEKSFLEVMSLVWLKLATNPNCYSCILGIAWAFISNRWHLELPGILEGSILIMSKAGTGTAMFNMGIFMALQEKLIVCGTSLTVMGMVLKFIAGPAAMAIGSIVLGLHGDVLRVAIIQAALPQSITSFIFAKEYGLHADVLSTAVIFGMLVSLPVLVAYYAALEFIH.

The next 10 membrane-spanning stretches (helical) occupy residues 7 to 27 (VYKVIEAMVPLYVALILGYGS), 39 to 59 (CDAINRLVCYFTLPLFTIEFT), 71 to 91 (FIAADVLSKVIIVTVLALWAK), 100 to 120 (WSITSFSLCTLTNSLVVGVPL), 132 to 152 (LVVQSSVFQAIVWLTLLLFVL), 210 to 230 (ILGIAWAFISNRWHLELPGIL), 234 to 254 (ILIMSKAGTGTAMFNMGIFMA), 271 to 291 (MVLKFIAGPAAMAIGSIVLGL), 295 to 315 (VLRVAIIQAALPQSITSFIFA), and 329 to 349 (VIFGMLVSLPVLVAYYAALEF).

The protein belongs to the auxin efflux carrier (TC 2.A.69.1) family. In terms of tissue distribution, expressed in elongating parts of hypocotyl, cotyledon vasculature and guard cells. Detected in root pericycle and root tip and at later developmental stages in leaves, stems and flowers. Expressed in veins of mature leaves.

Its subcellular location is the endoplasmic reticulum membrane. It localises to the cell membrane. In terms of biological role, auxin transporter regulating intracellular auxin homeostasis and metabolism. Mediates the auxin transport from the cytosol into the lumen of the endoplasmic reticulum. May also act as an auxin efflux carrier when located to the cell membrane. PIN5 and PIN8 may have an antagonistic/compensatory activity. Involved in unfolded protein response (UPR) activation. Involved in the control of vein patterning. Promotes vein formation. PIN5, PIN6, and PIN8 control vein network geometry, but they are expressed in mutually exclusive domains of leaf vascular cells. The protein is Auxin efflux carrier component 5 of Arabidopsis thaliana (Mouse-ear cress).